Consider the following 290-residue polypeptide: Porphobilinogen deaminase (290 aa).

S-(dipyrrolylmethanemethyl)cysteine is present on Cys237.

It belongs to the HMBS family. As to quaternary structure, monomer. Requires dipyrromethane as cofactor.

The catalysed reaction is 4 porphobilinogen + H2O = hydroxymethylbilane + 4 NH4(+). It participates in porphyrin-containing compound metabolism; protoporphyrin-IX biosynthesis; coproporphyrinogen-III from 5-aminolevulinate: step 2/4. Functionally, tetrapolymerization of the monopyrrole PBG into the hydroxymethylbilane pre-uroporphyrinogen in several discrete steps. This Clostridium kluyveri (strain NBRC 12016) protein is Porphobilinogen deaminase.